The sequence spans 500 residues: Cysteine-rich secretory protein LCCL domain-containing 1 (500 aa).

The N-terminal stretch at 1-23 (MMCKAQEWLRVTALLFVARAVPA) is a signal peptide. The 141-residue stretch at 66–206 (LDLHNKLRSQ…PKAVYLVCNY (141 aa)) folds into the SCP domain. The interval 258-281 (EIERQQSQVHDTHVRTRSDDSDRN) is disordered. LCCL domains are found at residues 289-384 (MSQI…ANSF) and 390-492 (TVQA…TGGK). 4 disulfide bridges follow: cysteine 295–cysteine 313, cysteine 317–cysteine 337, cysteine 396–cysteine 418, and cysteine 422–cysteine 445.

This sequence belongs to the CRISP family.

Its subcellular location is the secreted. The sequence is that of Cysteine-rich secretory protein LCCL domain-containing 1 (Crispld1) from Mus musculus (Mouse).